The chain runs to 206 residues: Probable GTP-binding protein EngB (206 aa).

An EngB-type G domain is found at 8 to 195 (RDAEVVLVGR…EECLRTRFHE (188 aa)). GTP-binding positions include 16–23 (GRSNVGKS), 41–45 (GVTRQ), 60–63 (DLPG), 140–143 (NKTD), and 175–177 (ICA). 2 residues coordinate Mg(2+): Ser23 and Thr43.

This sequence belongs to the TRAFAC class TrmE-Era-EngA-EngB-Septin-like GTPase superfamily. EngB GTPase family. The cofactor is Mg(2+).

Its function is as follows. Necessary for normal cell division and for the maintenance of normal septation. The chain is Probable GTP-binding protein EngB from Halorubrum lacusprofundi (strain ATCC 49239 / DSM 5036 / JCM 8891 / ACAM 34).